The sequence spans 328 residues: Phosphate acyltransferase (328 aa).

This sequence belongs to the PlsX family. Homodimer. Probably interacts with PlsY.

Its subcellular location is the cytoplasm. It carries out the reaction a fatty acyl-[ACP] + phosphate = an acyl phosphate + holo-[ACP]. The protein operates within lipid metabolism; phospholipid metabolism. Catalyzes the reversible formation of acyl-phosphate (acyl-PO(4)) from acyl-[acyl-carrier-protein] (acyl-ACP). This enzyme utilizes acyl-ACP as fatty acyl donor, but not acyl-CoA. The chain is Phosphate acyltransferase from Mycoplasmoides gallisepticum (strain R(low / passage 15 / clone 2)) (Mycoplasma gallisepticum).